Here is a 90-residue protein sequence, read N- to C-terminus: Kunitz-type serine protease inhibitor C5 (90 aa).

The N-terminal stretch at 1-24 (MSSGGLLLLLALLTLWAELTPISG) is a signal peptide. The region spanning 31–81 (CNLAPESGRCRGHLRRIYYNPDSNKCEVFFYGGCGGNDNNFETRKKCRQTC) is the BPTI/Kunitz inhibitor domain. 3 cysteine pairs are disulfide-bonded: cysteine 31-cysteine 81, cysteine 40-cysteine 64, and cysteine 56-cysteine 77. The propeptide occupies 85 to 90 (RKGRPT).

This sequence belongs to the venom Kunitz-type family. Expressed by the venom gland.

It localises to the secreted. Functionally, serine protease inhibitor that inhibits trypsin. The polypeptide is Kunitz-type serine protease inhibitor C5 (Daboia siamensis (Eastern Russel's viper)).